The sequence spans 239 residues: Ribosomal RNA small subunit methyltransferase G (239 aa).

S-adenosyl-L-methionine is bound by residues glycine 77, phenylalanine 82, 128-129, and arginine 147; that span reads AE.

This sequence belongs to the methyltransferase superfamily. RNA methyltransferase RsmG family.

Its subcellular location is the cytoplasm. Specifically methylates the N7 position of guanine in position 535 of 16S rRNA. This is Ribosomal RNA small subunit methyltransferase G from Bacillus anthracis (strain A0248).